Consider the following 424-residue polypeptide: Histidine--tRNA ligase (424 aa).

This sequence belongs to the class-II aminoacyl-tRNA synthetase family. As to quaternary structure, homodimer.

It localises to the cytoplasm. It carries out the reaction tRNA(His) + L-histidine + ATP = L-histidyl-tRNA(His) + AMP + diphosphate + H(+). The protein is Histidine--tRNA ligase of Escherichia coli O139:H28 (strain E24377A / ETEC).